The following is a 221-amino-acid chain: Translation initiation factor 6 (221 aa).

The protein belongs to the eIF-6 family.

In terms of biological role, binds to the 50S ribosomal subunit and prevents its association with the 30S ribosomal subunit to form the 70S initiation complex. The polypeptide is Translation initiation factor 6 (Halorubrum lacusprofundi (strain ATCC 49239 / DSM 5036 / JCM 8891 / ACAM 34)).